The following is a 1449-amino-acid chain: MWPNSNLNAVLLILAVLACPTSSQHVPLAMANSTSNQVPTDPGFMPLQQSPGSVFFVHHNQQNAMQLRHSMEGKLRNIRNTELRVAKIQEIFDSMHFSSAKGASNTRQASSNDSNVVNPQLQRDLQLFSERLSKKIQKATYVVLELRELLRYNLTKVWQYSYDDEDDESESEMDLEMELEDLHARNTASPTDEHVQLYLNTQIESCQPDYETDLEYGSSSTQSIHYNRQQIQILNYLKSDDARATFLNENNARSLAVNGYISNQLVLLKRRLSRSDAENSNSKPISGNHFKHIYFLSNSDGASASLHFRQLYVSAIKQKFVLFLIDVGSALSAELFDLSKSFVHEMLQLLEDTDKVSLVTVASEANFMSLEAFPAEAGHGIYSATRAHKEEIISFINSLSRAQAFTNHSLGFEYSFELLHRLQQSGMINTAEQPVEFVYITRGLLTNLSDAMAVLRVVADGQRRLRAPVIINTCAVVLDEKRIMYEKQFLNDVASQNYTKYEIDVASWWPSGQEASELVGRFYVLSKMHAETSLPQTSSRIFGPLFQERYLSDTLEVHPPVVDADSGDVLVSITHAVPPYGVVGVNLYLSDLLEDLLNYPSTTSSAKQGLGYAFLLDRSTGNTLAHPAFPRPLIQRETSYPVNIAYLENATDFSSHIRDRLLREESGNVTTDVYVGRQRLQRTYYWQSVLGFYVLCLVSSGGDTLRNVSSTQRYNLKDTVSNYEPGYYGESMDLLYHRLDLNQGGSAPPKTCRYFRQVATMDAPTLFLSAAAFESPFGFLHNNRPRTQLRHVESIMAYLRDSSGLLANMGLRPSIRHEVGVLYQAMQQLRRRHQDARGSLRSHVIRRYIASVSGVLQLYPGCLLSSSYDPTRRPWFRQAIAQPGKIVSTAPYLDAGGAGYIITIAHTIFEGKAHALHSAQQDRPVAVVALDVPYAFYYRLILEGTPICQLPHIKCLLFEHEGYLLAHPSMLQPATLTKNQRRPHEHLTHKESYLANDMLNHGQLVRKLGCASYQNRTLQRYYAFNTSLSSILGNVVHGERTKYAIALIRGSNLFAAVLNSSCDGGAFCPCSTIDRECLNCKRMDQTDCECPCECPMVGDSSSPSSLMYFANYTRQFPYCPPPSEHFIALPPTTQLLSTLPNCPGSAGICETYSTQRECLGVMGCEWCQLDVDGNSFSTSFCSSQASCFNGVLASLTPYGELDEMELLAAHNPQREQHAYSAFGPLGGAIVVLVMVIGFAIYCYRHNLDAQTQEHFYVDSVQEENYGLPLSRFNFDDCKAHDEPPLGGGYDHASAQRQLMHAADISPYHVSSGSSYRRPPNGESDHGYSTMTPHEDSSDQQCFTLAEPLLLHDKRHSKSDTMSISTSISSPTNRQQSSSQPNTHPYLSNQPTSKTERYKQVQATPSPCRGTPAGGSVYGQTTLPLEGDKTRPHYILAPVTVHRHMETAES.

The first 23 residues, methionine 1–serine 23, serve as a signal peptide directing secretion. At glutamine 24 to serine 1220 the chain is on the extracellular side. 6 N-linked (GlcNAc...) asparagine glycosylation sites follow: asparagine 32, asparagine 112, asparagine 153, asparagine 407, asparagine 447, and asparagine 497. A VWFA domain is found at phenylalanine 320–isoleucine 541. The Cache 1 domain occupies valine 557–serine 639. Asparagine 649, asparagine 668, and asparagine 707 each carry an N-linked (GlcNAc...) asparagine glycan. The 46-residue stretch at threonine 889 to tyrosine 934 folds into the Cache 2 domain. 4 N-linked (GlcNAc...) asparagine glycosylation sites follow: asparagine 1015, asparagine 1025, asparagine 1059, and asparagine 1111. A helical membrane pass occupies residues alanine 1221 to tyrosine 1241. Residues cysteine 1242 to serine 1449 are Cytoplasmic-facing. Disordered regions lie at residues tyrosine 1307–glutamine 1339 and aspartate 1352–valine 1416. The span at aspartate 1359–serine 1369 shows a compositional bias: low complexity. Positions proline 1370–serine 1392 are enriched in polar residues.

The protein belongs to the calcium channel subunit alpha-2/delta family.

Its subcellular location is the membrane. The protein is VWFA and cache domain-containing protein CG16868 of Drosophila melanogaster (Fruit fly).